Here is a 603-residue protein sequence, read N- to C-terminus: UvrABC system protein C (603 aa).

The region spanning 14–92 is the GIY-YIG domain; the sequence is ELPGVYRMLD…IKSLAPRYNI (79 aa). Residues 201–236 form the UVR domain; the sequence is QEVTRRLTKSMEEASAKLAFEQAAVFRDQIQSLHQV.

It belongs to the UvrC family. Interacts with UvrB in an incision complex.

The protein resides in the cytoplasm. Functionally, the UvrABC repair system catalyzes the recognition and processing of DNA lesions. UvrC both incises the 5' and 3' sides of the lesion. The N-terminal half is responsible for the 3' incision and the C-terminal half is responsible for the 5' incision. In Dechloromonas aromatica (strain RCB), this protein is UvrABC system protein C.